Here is a 330-residue protein sequence, read N- to C-terminus: Ketol-acid reductoisomerase (NADP(+)) (330 aa).

The 180-residue stretch at 2-181 (MEKYHETDAD…GATRAVVLET (180 aa)) folds into the KARI N-terminal Rossmann domain. NADP(+) is bound by residues 25 to 28 (YGSQ), Arg-48, Ser-52, and 82 to 85 (DENQ). The active site involves His-107. Gly-133 is a binding site for NADP(+). One can recognise a KARI C-terminal knotted domain in the interval 182–327 (TFREETETDL…SELRAMMPQF (146 aa)). Mg(2+) is bound by residues Asp-190, Glu-194, Glu-226, and Glu-230. Ser-251 provides a ligand contact to substrate.

This sequence belongs to the ketol-acid reductoisomerase family. It depends on Mg(2+) as a cofactor.

The catalysed reaction is (2R)-2,3-dihydroxy-3-methylbutanoate + NADP(+) = (2S)-2-acetolactate + NADPH + H(+). It carries out the reaction (2R,3R)-2,3-dihydroxy-3-methylpentanoate + NADP(+) = (S)-2-ethyl-2-hydroxy-3-oxobutanoate + NADPH + H(+). It functions in the pathway amino-acid biosynthesis; L-isoleucine biosynthesis; L-isoleucine from 2-oxobutanoate: step 2/4. It participates in amino-acid biosynthesis; L-valine biosynthesis; L-valine from pyruvate: step 2/4. In terms of biological role, involved in the biosynthesis of branched-chain amino acids (BCAA). Catalyzes an alkyl-migration followed by a ketol-acid reduction of (S)-2-acetolactate (S2AL) to yield (R)-2,3-dihydroxy-isovalerate. In the isomerase reaction, S2AL is rearranged via a Mg-dependent methyl migration to produce 3-hydroxy-3-methyl-2-ketobutyrate (HMKB). In the reductase reaction, this 2-ketoacid undergoes a metal-dependent reduction by NADPH to yield (R)-2,3-dihydroxy-isovalerate. This is Ketol-acid reductoisomerase (NADP(+)) from Methanocorpusculum labreanum (strain ATCC 43576 / DSM 4855 / Z).